We begin with the raw amino-acid sequence, 952 residues long: Pentatricopeptide repeat-containing protein At5g04810, chloroplastic (952 aa).

Residues 1–60 constitute a chloroplast transit peptide; sequence MDNGGSVLSLSAPHFPYSATILRRHSPVASISFSLKQPPPQPPEPPESPPDLRRPEKSIG. Disordered stretches follow at residues 30 to 95 and 115 to 163; these read SISF…VSPL and LRLS…EFRQ. Residues 37–49 show a composition bias toward pro residues; the sequence is QPPPQPPEPPESP. The segment covering 58-68 has biased composition (low complexity); that stretch reads SIGSSSSSSSP. A compositionally biased stretch (pro residues) spans 122-133; that stretch reads SPPPPPPPPPPV. A compositionally biased stretch (basic and acidic residues) spans 137–163; that stretch reads TQFRDEFRSDTKPPEEETRNPQQEFRQ. Residues 167–238 form the RRM domain; it reads IFVGNLPTWI…VEFHGRILTV (72 aa). Residues 259–280 are compositionally biased toward basic and acidic residues; sequence EGEEDTKMSNKSSWHQEREGSR. The interval 259 to 281 is disordered; the sequence is EGEEDTKMSNKSSWHQEREGSRK. PPR repeat units lie at residues 308 to 342, 343 to 377, 378 to 412, 413 to 447, 448 to 482, 483 to 517, 518 to 552, 553 to 587, 588 to 622, 623 to 657, 658 to 692, 693 to 727, 728 to 762, 763 to 797, and 798 to 832; these read SRTEFGLMVKFYGRRGDMHRARETFERMRARGITP, TSRIYTSLIHAYAVGRDMDEALSCVRKMKEEGIEM, SLVTYSVIVGGFSKAGHAEAADYWFDEAKRIHKTL, NASIYGKIIYAHCQTCNMERAEALVREMEEEGIDA, PIAIYHTMMDGYTMVADEKKGLVVFKRLKECGFTP, TVVTYGCLINLYTKVGKISKALEVSRVMKEEGVKH, NLKTYSMMINGFVKLKDWANAFAVFEDMVKEGMKP, DVILYNNIISAFCGMGNMDRAIQTVKEMQKLRHRP, TTRTFMPIIHGYAKSGDMRRSLEVFDMMRRCGCVP, TVHTFNGLINGLVEKRQMEKAVEILDEMTLAGVSA, NEHTYTKIMQGYASVGDTGKAFEYFTRLQNEGLDV, DIFTYEALLKACCKSGRMQSALAVTKEMSARNIPR, NSFVYNILIDGWARRGDVWEAADLIQQMKKEGVKP, DIHTYTSFISACSKAGDMNRATQTIEEMEALGVKP, and NIKTYTTLIKGWARASLPEKALSCYEEMKAMGIKP. The tract at residues 918 to 952 is disordered; sequence DQVSDVDSDEDDVDGEDGEDDEDVNSVSDLLSPYK. Residues 921–941 are compositionally biased toward acidic residues; it reads SDVDSDEDDVDGEDGEDDEDV.

It belongs to the PPR family. P subfamily.

It is found in the plastid. It localises to the chloroplast. Functionally, may play a role in the plastid ribosome biogenesis. This chain is Pentatricopeptide repeat-containing protein At5g04810, chloroplastic (PPR4), found in Arabidopsis thaliana (Mouse-ear cress).